A 263-amino-acid polypeptide reads, in one-letter code: 3-deoxy-manno-octulosonate cytidylyltransferase 1 (263 aa).

The protein belongs to the KdsB family.

Its subcellular location is the cytoplasm. The enzyme catalyses 3-deoxy-alpha-D-manno-oct-2-ulosonate + CTP = CMP-3-deoxy-beta-D-manno-octulosonate + diphosphate. Its pathway is nucleotide-sugar biosynthesis; CMP-3-deoxy-D-manno-octulosonate biosynthesis; CMP-3-deoxy-D-manno-octulosonate from 3-deoxy-D-manno-octulosonate and CTP: step 1/1. The protein operates within bacterial outer membrane biogenesis; lipopolysaccharide biosynthesis. Functionally, activates KDO (a required 8-carbon sugar) for incorporation into bacterial lipopolysaccharide in Gram-negative bacteria. The polypeptide is 3-deoxy-manno-octulosonate cytidylyltransferase 1 (Burkholderia ambifaria (strain ATCC BAA-244 / DSM 16087 / CCUG 44356 / LMG 19182 / AMMD) (Burkholderia cepacia (strain AMMD))).